A 95-amino-acid polypeptide reads, in one-letter code: Scorpine-like peptide Smp76 (95 aa).

The first 19 residues, 1-19, serve as a signal peptide directing secretion; the sequence is MNCKLTALLFLGLIVIASC. In terms of domain architecture, BetaSPN-type CS-alpha/beta spans 55–95; that stretch reads EFQCVANVDTLGNCKKHCAKTTGEKGYCHGTKCKCGIELSY. 3 disulfides stabilise this stretch: Cys58/Cys82, Cys68/Cys87, and Cys72/Cys89.

Post-translationally, disulfide bonds are critical for antiviral function, and their disruption inhibit viral activity. In terms of tissue distribution, expressed by the venom gland.

The protein resides in the secreted. Antibacterial peptide. Dose-dependently inhibits Dengue virus (DENV), Zika virus (ZIKV) and Hepatitis C virus (HCV) infections. Two mechanisms of action have been described by two different groups: one involving activity on extracellular particles, and the other regulating the immune system. On Dengue virus (DENV), Zika virus (ZIKV), suppress the established viral infection, similar to the effect of interferon (IFN)-beta. Mechanistically, upregulates the expression of IFN-beta by activating interferon regulatory transcription factor 3 (IRF3) phosphorylation. On HCV and DENV, acts by inactivating extra-cellular infectious particles without affecting viral replication. Shows very weak inhibition on measles virus. Is neither toxic nor hemolytic in vitro at high concentrations. The polypeptide is Scorpine-like peptide Smp76 (Scorpio palmatus (Israeli golden scorpion)).